Here is a 210-residue protein sequence, read N- to C-terminus: Transcriptional regulator MxiE (210 aa).

The HTH araC/xylS-type domain maps to 99–199; it reads YHLVLYLLRT…GFSARELSNI (101 aa). 2 consecutive DNA-binding regions (H-T-H motif) follow at residues 118–139 and 166–189; these read KSLTEHYGVSEAYFRSLCRKAL and ITSAAMNNGYASTSHFSNEIKTRL.

Functionally, necessary for the secretion of ipa invasins. Probable transcriptional regulatory protein. The polypeptide is Transcriptional regulator MxiE (mxiE) (Shigella flexneri).